Here is a 364-residue protein sequence, read N- to C-terminus: tRNA-specific 2-thiouridylase MnmA (364 aa).

ATP contacts are provided by residues 12–19 (GMSGGVDS) and Met-38. The segment at 98-100 (NPD) is interaction with target base in tRNA. Cys-103 functions as the Nucleophile in the catalytic mechanism. A disulfide bond links Cys-103 and Cys-199. An ATP-binding site is contributed by Gly-127. The tract at residues 149–151 (KDQ) is interaction with tRNA. Cys-199 serves as the catalytic Cysteine persulfide intermediate. Positions 307 to 308 (RY) are interaction with tRNA.

Belongs to the MnmA/TRMU family.

It is found in the cytoplasm. It catalyses the reaction S-sulfanyl-L-cysteinyl-[protein] + uridine(34) in tRNA + AH2 + ATP = 2-thiouridine(34) in tRNA + L-cysteinyl-[protein] + A + AMP + diphosphate + H(+). Catalyzes the 2-thiolation of uridine at the wobble position (U34) of tRNA, leading to the formation of s(2)U34. The chain is tRNA-specific 2-thiouridylase MnmA from Shouchella clausii (strain KSM-K16) (Alkalihalobacillus clausii).